A 732-amino-acid chain; its full sequence is Interleukin-31 receptor subunit alpha (732 aa).

Positions 1-19 (MMWTWALWMLPSLCKFSLA) are cleaved as a signal peptide. Topologically, residues 20-519 (ALPAKPENIS…FKTLSFSVFE (500 aa)) are extracellular. 5 Fibronectin type-III domains span residues 24-122 (KPEN…IAKT), 124-225 (PPKI…TEEE), 223-315 (EEEA…PVAT), 319-416 (PAIQ…QAYA), and 421-515 (PSEG…TLSF). N-linked (GlcNAc...) asparagine glycans are attached at residues asparagine 37, asparagine 67, asparagine 93, asparagine 166, asparagine 187, asparagine 277, asparagine 283, asparagine 395, asparagine 455, and asparagine 504. A helical membrane pass occupies residues 520 to 540 (IILITSLIGGGLLILIILTVA). Residues 541 to 732 (YGLKKPNKLT…KLPEHTKGEV (192 aa)) lie on the Cytoplasmic side of the membrane.

This sequence belongs to the type I cytokine receptor family. Type 2 subfamily. As to quaternary structure, heterodimer with OSMR. Interacts with JAK1 and STAT3. In terms of processing, N-glycosylated. Expressed in CD14- and CD56-positive blood cells. Expressed in macrophages. Expressed in keratinocytes. Expressed in a subset of dorsal root ganglia neurons (at protein level). Expressed at low levels in testis, ovary, brain, prostate, placenta, thymus, bone marrow, trachea and skin. Expressed in bronchial and alveolar epithelial cells and pulmonary fibroblasts. Detected in all of the myelomonocytic lineage. Isoform 6: Expressed at higher levels in lesional skin compared to healthy skin of atopic dermatitis patients.

The protein resides in the cell membrane. It is found in the presynaptic cell membrane. It localises to the cell projection. The protein localises to the axon. Its function is as follows. Associates with OSMR to form the interleukin-31 receptor which activates STAT3 and to a lower extent STAT1 and STAT5. May function in skin immunity. Mediates IL31-induced itch, probably in a manner dependent on cation channels TRPA1 and TRPV1. Positively regulates numbers and cycling status of immature subsets of myeloid progenitor cells in bone marrow in vivo and enhances myeloid progenitor cell survival in vitro. The sequence is that of Interleukin-31 receptor subunit alpha (IL31RA) from Homo sapiens (Human).